We begin with the raw amino-acid sequence, 129 residues long: Large ribosomal subunit protein bL20 (129 aa).

Belongs to the bacterial ribosomal protein bL20 family.

In terms of biological role, binds directly to 23S ribosomal RNA and is necessary for the in vitro assembly process of the 50S ribosomal subunit. It is not involved in the protein synthesizing functions of that subunit. The protein is Large ribosomal subunit protein bL20 of Mycobacterium sp. (strain JLS).